The chain runs to 312 residues: MANRTVKDAHSIHGTNPQYLVEKIIRTRIYESKYWKEECFGLTAELVVDKAMELKFVGGVYGGNIKPTPFLCLTLKMLQIQPEKDIIVEFIKNEDFKYVRMLGALYMRLTGTAIDCYKYLEPLYNDYRKIKSQNRNGEFVLMHVDEFIYELLHSERVCDIILPRLQKRYVLEEAEQLEPRVSALEEDMDDVESSEEEEEEDEKLERVPSPDHRRRSYRDLDKPRRSPALRYRRSRSRSPRRRSRSPKRRSPSPRRERHRSKSPRRHRSRSRDRRHRSRSKSPGHHRSHRHRSHSKSPERSKKSHKKSRRGNE.

Residues 1–179 (MANRTVKDAH…VLEEAEQLEP (179 aa)) form an N-terminal protein interaction domain region. Residues Ser11, Ser193, Ser194, Ser209, and Ser226 each carry the phosphoserine modification. Positions 170-204 (VLEEAEQLEPRVSALEEDMDDVESSEEEEEEDEKL) form a coiled coil. The tract at residues 181-312 (VSALEEDMDD…SHKKSRRGNE (132 aa)) is disordered. A compositionally biased stretch (acidic residues) spans 184–202 (LEEDMDDVESSEEEEEEDE). Residues 203–224 (KLERVPSPDHRRRSYRDLDKPR) are compositionally biased toward basic and acidic residues. 2 stretches are compositionally biased toward basic residues: residues 225-294 (RSPA…RSHS) and 301-312 (KKSHKKSRRGNE).

Belongs to the PRP38 family. In terms of assembly, component of the spliceosome B complex. Interacts (via N-terminal interaction domain) with ZMAT2 and MFAP1.

It localises to the nucleus. Involved in pre-mRNA splicing as a component of the spliceosome. The polypeptide is Pre-mRNA-splicing factor 38A (Prpf38a) (Mus musculus (Mouse)).